The sequence spans 670 residues: Sodium/glucose cotransporter 2 (670 aa).

The Extracellular portion of the chain corresponds to 1-20 (MEGHVEEGSELGEQKVLIDN). A helical membrane pass occupies residues 21-42 (PADILVIAAYFLLVIGVGLWSM). The Cytoplasmic portion of the chain corresponds to 43–61 (FRTNRGTVGGYFLAGRSMV). A helical transmembrane segment spans residues 62–83 (WWPVGASLFASNIGSGHFVGLA). The Na(+) site is built by Ala-71 and Ile-74. The Extracellular segment spans residues 84-91 (GTGAASGL). Residues 92-112 (AVAGFEWNALFVVLLLGWLFV) form a helical membrane-spanning segment. The Cytoplasmic segment spans residues 113–134 (PVYLTAGVITMPQYLRKRFGGR). Residues 135–164 (RIRLYLSVLSLFLYIFTKISVDMFSGAVFI) form a helical membrane-spanning segment. At 165 to 171 (QQALGWN) the chain is on the extracellular side. 2 helical membrane passes run 172–193 (IYAS…GGLA) and 194–215 (ALMY…ILTG). At 216 to 273 (YAFHEVGGYSGLFDKYLGAVTSLTVSKDPAVGNISSTCYQPRPDSYHLLRDPVTGGLP) the chain is on the extracellular side. Asn-248 is a glycosylation site (N-linked (GlcNAc...) asparagine). Cystine bridges form between Cys-253–Cys-509, Cys-343–Cys-349, Cys-353–Cys-359, and Cys-515–Cys-520. Residues 274–293 (WPALLLGLTIVSGWHWCSDQ) traverse the membrane as a helical segment. Topologically, residues 294–307 (VIVQRCLAGKNLTH) are cytoplasmic. A helical membrane pass occupies residues 308 to 329 (IKAGCILCGYLKLMPMFLMVMP). The Extracellular segment spans residues 330 to 373 (GMISRILYPDEVACVVPEVCKRVCGTEVGCSNIAYPRLVVKLMP). The chain crosses the membrane as a helical span at residues 374-404 (NGLRGLMLAVMLAALMSSLASIFNSSSTLFT). Na(+) contacts are provided by Ala-387, Ser-390, and Ser-391. The Cytoplasmic segment spans residues 405 to 422 (MDIYTRLRPRAGDRELLL). The helical transmembrane segment at 423–444 (VGRLWVVFIVAVSVAWLPVVQA) threads the bilayer. Residues 445-449 (AQGGQ) are Extracellular-facing. Residues 450 to 475 (LFDYIQSVSSYLAPPVSAVFVLALFV) form a helical membrane-spanning segment. Over 476-480 (PRVNE) the chain is Cytoplasmic. The chain crosses the membrane as a helical span at residues 481 to 503 (KGAFWGLIGGLLMGLARLIPEFF). Over 504–521 (FGTGSCVRPSACPAIFCR) the chain is Extracellular. Residues 522-545 (VHYLYFAIILFFCSGFLTLAISRC) traverse the membrane as a helical segment. The Cytoplasmic segment spans residues 546 to 649 (TAPIPQKHLH…DISEDPSWAR (104 aa)). A helical transmembrane segment spans residues 650 to 668 (VVNLNALLMMTVAVFLWGF). Topologically, residues 669 to 670 (YA) are extracellular.

Belongs to the sodium:solute symporter (SSF) (TC 2.A.21) family. As to quaternary structure, forms a heterodimer (via TM13) with PDZK1IP1 (via N-terminal transmembrane helix); this interaction enhances SLC5A2 transporter activity. Post-translationally, glycosylated at a single site. In terms of tissue distribution, kidney, in proximal tubule S1 segments.

The protein localises to the apical cell membrane. It catalyses the reaction D-glucose(out) + Na(+)(out) = D-glucose(in) + Na(+)(in). Its activity is regulated as follows. Enhanced by the interaction with PDZK1IP1/MAP17. Functionally, electrogenic Na(+)-coupled sugar symporter that actively transports D-glucose at the plasma membrane, with a Na(+) to sugar coupling ratio of 1:1. Transporter activity is driven by a transmembrane Na(+) electrochemical gradient set by the Na(+)/K(+) pump. Unlike SLC5A1/SGLT1, requires the auxiliary protein PDZK1IP1/MAP17 for full transporter activity. Has a primary role in D-glucose reabsorption from glomerular filtrate across the brush border of the early proximal tubules of the kidney. This is Sodium/glucose cotransporter 2 (Slc5a2) from Rattus norvegicus (Rat).